A 584-amino-acid chain; its full sequence is ATP-dependent lipid A-core flippase 2 (584 aa).

The next 6 membrane-spanning stretches (helical) occupy residues 32-52 (IFIALAGLCLFSFVDAGMIYF), 68-88 (TLQLGALLVVAIFFLRGIASF), 146-166 (SAVVIAIRESVIILVLFSMMV), 167-187 (YNSWQLTAIFLVIVPIIALII), 254-274 (AISNPVIQLIASFAIAAVLLL), and 280-300 (VLNQLTPGSFTLILIAMGSLL). The ABC transmembrane type-1 domain occupies 33-315 (FIALAGLCLF…LSNINQQLQK (283 aa)). The ABC transporter domain maps to 347 to 583 (IRFNNFSFTY…AGYYQSLYQS (237 aa)). 381–388 (GESGSGKS) is a binding site for ATP.

This sequence belongs to the ABC transporter superfamily. Lipid exporter (TC 3.A.1.106) family. As to quaternary structure, homodimer.

Its subcellular location is the cell inner membrane. It carries out the reaction ATP + H2O + lipid A-core oligosaccharideSide 1 = ADP + phosphate + lipid A-core oligosaccharideSide 2.. Functionally, involved in lipopolysaccharide (LPS) biosynthesis. Translocates lipid A-core from the inner to the outer leaflet of the inner membrane. Transmembrane domains (TMD) form a pore in the inner membrane and the ATP-binding domain (NBD) is responsible for energy generation. The chain is ATP-dependent lipid A-core flippase 2 from Colwellia psychrerythraea (strain 34H / ATCC BAA-681) (Vibrio psychroerythus).